The sequence spans 158 residues: 6,7-dimethyl-8-ribityllumazine synthase (158 aa).

Residues phenylalanine 23, 61–63 (SFE), and 85–87 (AVI) contribute to the 5-amino-6-(D-ribitylamino)uracil site. 90 to 91 (ET) contacts (2S)-2-hydroxy-3-oxobutyl phosphate. The active-site Proton donor is histidine 93. Phenylalanine 118 is a binding site for 5-amino-6-(D-ribitylamino)uracil. Residue arginine 132 coordinates (2S)-2-hydroxy-3-oxobutyl phosphate.

It belongs to the DMRL synthase family.

It carries out the reaction (2S)-2-hydroxy-3-oxobutyl phosphate + 5-amino-6-(D-ribitylamino)uracil = 6,7-dimethyl-8-(1-D-ribityl)lumazine + phosphate + 2 H2O + H(+). It functions in the pathway cofactor biosynthesis; riboflavin biosynthesis; riboflavin from 2-hydroxy-3-oxobutyl phosphate and 5-amino-6-(D-ribitylamino)uracil: step 1/2. In terms of biological role, catalyzes the formation of 6,7-dimethyl-8-ribityllumazine by condensation of 5-amino-6-(D-ribitylamino)uracil with 3,4-dihydroxy-2-butanone 4-phosphate. This is the penultimate step in the biosynthesis of riboflavin. This Prochlorococcus marinus (strain MIT 9301) protein is 6,7-dimethyl-8-ribityllumazine synthase.